The sequence spans 830 residues: DNA gyrase subunit A (830 aa).

The 481-residue stretch at 34 to 514 folds into the Topo IIA-type catalytic domain; sequence LPDVRDGLKP…NHSDINMEDL (481 aa). The active-site O-(5'-phospho-DNA)-tyrosine intermediate is Y122. Positions 541 to 547 match the GyrA-box motif; that stretch reads QRRGGKG.

The protein belongs to the type II topoisomerase GyrA/ParC subunit family. In terms of assembly, heterotetramer, composed of two GyrA and two GyrB chains. In the heterotetramer, GyrA contains the active site tyrosine that forms a transient covalent intermediate with DNA, while GyrB binds cofactors and catalyzes ATP hydrolysis.

Its subcellular location is the cytoplasm. The enzyme catalyses ATP-dependent breakage, passage and rejoining of double-stranded DNA.. In terms of biological role, a type II topoisomerase that negatively supercoils closed circular double-stranded (ds) DNA in an ATP-dependent manner to modulate DNA topology and maintain chromosomes in an underwound state. Negative supercoiling favors strand separation, and DNA replication, transcription, recombination and repair, all of which involve strand separation. Also able to catalyze the interconversion of other topological isomers of dsDNA rings, including catenanes and knotted rings. Type II topoisomerases break and join 2 DNA strands simultaneously in an ATP-dependent manner. The protein is DNA gyrase subunit A of Buchnera aphidicola subsp. Acyrthosiphon pisum (strain APS) (Acyrthosiphon pisum symbiotic bacterium).